The chain runs to 419 residues: L-rhamnose isomerase (419 aa).

Mn(2+) is bound by residues histidine 262, aspartate 294, and aspartate 296.

It belongs to the rhamnose isomerase family. In terms of assembly, homotetramer. The cofactor is Mn(2+).

Its subcellular location is the cytoplasm. The enzyme catalyses L-rhamnopyranose = L-rhamnulose. It participates in carbohydrate degradation; L-rhamnose degradation; glycerone phosphate from L-rhamnose: step 1/3. Catalyzes the interconversion of L-rhamnose and L-rhamnulose. This Salmonella gallinarum (strain 287/91 / NCTC 13346) protein is L-rhamnose isomerase.